The chain runs to 41 residues: Large ribosomal subunit protein bL36B (41 aa).

The protein belongs to the bacterial ribosomal protein bL36 family.

This Haemophilus ducreyi (strain 35000HP / ATCC 700724) protein is Large ribosomal subunit protein bL36B.